Here is a 55-residue protein sequence, read N- to C-terminus: Large ribosomal subunit protein bL33 (55 aa).

Belongs to the bacterial ribosomal protein bL33 family.

The protein is Large ribosomal subunit protein bL33 of Rhodopseudomonas palustris (strain BisB18).